Reading from the N-terminus, the 339-residue chain is HTH-type transcriptional regulator SyrM 2 (339 aa).

The HTH lysR-type domain occupies 32–89; sequence VDLNLLVELEALLQYRNITHAAQHVGRSQPAMSRALSRLRDMFNDDLLVRGSSGLVPT. A DNA-binding region (H-T-H motif) is located at residues 49-68; that stretch reads ITHAAQHVGRSQPAMSRALS.

The protein belongs to the LysR transcriptional regulatory family.

In terms of biological role, acts in trans to stimulate nod gene expression. This chain is HTH-type transcriptional regulator SyrM 2 (syrM2), found in Sinorhizobium fredii (strain NBRC 101917 / NGR234).